The chain runs to 465 residues: Methylenetetrahydrofolate--tRNA-(uracil-5-)-methyltransferase TrmFO (465 aa).

An FAD-binding site is contributed by 10 to 15 (GAGLAG).

The protein belongs to the MnmG family. TrmFO subfamily. It depends on FAD as a cofactor.

The protein resides in the cytoplasm. It carries out the reaction uridine(54) in tRNA + (6R)-5,10-methylene-5,6,7,8-tetrahydrofolate + NADH + H(+) = 5-methyluridine(54) in tRNA + (6S)-5,6,7,8-tetrahydrofolate + NAD(+). The catalysed reaction is uridine(54) in tRNA + (6R)-5,10-methylene-5,6,7,8-tetrahydrofolate + NADPH + H(+) = 5-methyluridine(54) in tRNA + (6S)-5,6,7,8-tetrahydrofolate + NADP(+). Its function is as follows. Catalyzes the folate-dependent formation of 5-methyl-uridine at position 54 (M-5-U54) in all tRNAs. This Deinococcus radiodurans (strain ATCC 13939 / DSM 20539 / JCM 16871 / CCUG 27074 / LMG 4051 / NBRC 15346 / NCIMB 9279 / VKM B-1422 / R1) protein is Methylenetetrahydrofolate--tRNA-(uracil-5-)-methyltransferase TrmFO.